Here is a 525-residue protein sequence, read N- to C-terminus: GMP synthase [glutamine-hydrolyzing] (525 aa).

One can recognise a Glutamine amidotransferase type-1 domain in the interval 8–207; sequence KILILDFGSQ…ALDICGCAAN (200 aa). Cysteine 85 (nucleophile) is an active-site residue. Active-site residues include histidine 181 and glutamate 183. The region spanning 208 to 400 is the GMPS ATP-PPase domain; sequence WKPSSIIEDA…LGLPYNMLYR (193 aa). Position 235–241 (235–241) interacts with ATP; sequence SGGVDSS.

Homodimer.

It carries out the reaction XMP + L-glutamine + ATP + H2O = GMP + L-glutamate + AMP + diphosphate + 2 H(+). Its pathway is purine metabolism; GMP biosynthesis; GMP from XMP (L-Gln route): step 1/1. Catalyzes the synthesis of GMP from XMP. This is GMP synthase [glutamine-hydrolyzing] from Shewanella sp. (strain MR-7).